A 721-amino-acid chain; its full sequence is MRFATAQLAALAYYILSTEATFPLLGDIFNCIPHNTPPVCTDLGLYHDSSISLGGSKNKREAEIANKDGTIEKRTFGSAGVNAGFNAAFVVSNAKKLSDGSYGIDCNFKSDSSVQLNSAFGKKVKQLSITGTGYSDISLLGNVANPFEWSASLKVKAEIVKGKCCLPSGFRIVTDFESNCPEFDAIKQFFGSSQIIYKVNAVSNAIGTFDASALFNAQVKAFPAKRELDEFEELSNDGVTHSKRTLGLLLGLLKKVTGGCDTLQQFCWDCQCDTPSPSTTTVSTSSAPSTSPESSAPSTTTVTTSSSPVTSPESSVPETTTVTTSSVPETTPESSAPETTTVTTSSVPSTTPESSAPETTPESSAPESSVPESSAPETTPESSAPESSVPESSAPETETETTPTAHLTTTTAQTTTVITVTSCSNNACSKTEVTTGVVVVTSEDTIYTTFCPLTETTPVPSSVDSTSVTSAPETTPESTAPESSAPESSAPESSAPVTETPTGPVSTVTEQSKTIVTITSCSNNACSESKVTTGVVVVTSEDTVYTTFCPLTETTPATESASESSAPATESVPATESAPVAPESSAPGTETAPATESAPATESSPVAPGTETTPATPGAESTPVTPVAPESSAPAVESSPVAPGVETTPVAPVAPSTTAKTSALVSTTEGTIPTTLESVPAIQPSANSSYTIASVSSFEGAGNNMRLTYGAAIIGLAAFLI.

Residues 1–20 (MRFATAQLAALAYYILSTEA) form the signal peptide. The 224-residue stretch at 55 to 278 (GSKNKREAEI…DCQCDTPSPS (224 aa)) folds into the Flo11 domain. Disordered stretches follow at residues 278–410 (STTT…LTTT), 453–510 (LTET…TVTE), and 555–666 (TPAT…ALVS). Residues 454–499 (TETTPVPSSVDSTSVTSAPETTPESTAPESSAPESSAPESSAPVTE) are compositionally biased toward low complexity. The span at 500–510 (TPTGPVSTVTE) shows a compositional bias: polar residues. 2 stretches are compositionally biased toward low complexity: residues 555–575 (TPAT…VPAT) and 584–663 (SSAP…KTSA). Serine 696 carries the GPI-anchor amidated serine lipid modification. Residues 697–721 (SFEGAGNNMRLTYGAAIIGLAAFLI) constitute a propeptide, removed in mature form.

Belongs to the HWP1 family. In terms of processing, the GPI-anchor is attached to the protein in the endoplasmic reticulum and serves to target the protein to the cell surface. There, the glucosamine-inositol phospholipid moiety is cleaved off and the GPI-modified mannoprotein is covalently attached via its lipidless GPI glycan remnant to the 1,6-beta-glucan of the outer cell wall layer.

Its subcellular location is the secreted. It localises to the cell wall. The protein localises to the membrane. In terms of biological role, GPI-anchored cell wall protein required for mating efficiency, biofilm formation, and virulence. Involved in normal disseminated infection, but not in intestinal colonization. The chain is Cell wall protein RBT1 (RBT1) from Candida albicans (strain SC5314 / ATCC MYA-2876) (Yeast).